We begin with the raw amino-acid sequence, 620 residues long: Chaperone protein DnaK (620 aa).

Thr197 carries the post-translational modification Phosphothreonine; by autocatalysis. The disordered stretch occupies residues 597 to 620 (AMANKNNAEQPKKKDDDVIDAEVE).

This sequence belongs to the heat shock protein 70 family.

Its function is as follows. Acts as a chaperone. This is Chaperone protein DnaK from Helicobacter pylori (strain G27).